The sequence spans 199 residues: DnaJ homolog subfamily C member 5B (199 aa).

Phosphoserine is present on residues serine 14 and serine 16. The J domain maps to 19 to 84 (ALYEILGLHK…SKRNIYDKYG (66 aa)).

Interacts with the chaperone complex consisting of HSC70 and SGTA. In terms of processing, palmitoylated.

It is found in the membrane. In Bos taurus (Bovine), this protein is DnaJ homolog subfamily C member 5B (DNAJC5B).